Reading from the N-terminus, the 497-residue chain is Glycerol kinase (497 aa).

ADP is bound at residue Thr13. ATP contacts are provided by Thr13, Thr14, and Ser15. Residue Thr13 coordinates sn-glycerol 3-phosphate. Arg17 contacts ADP. Sn-glycerol 3-phosphate-binding residues include Arg83, Glu84, and Tyr135. Arg83, Glu84, and Tyr135 together coordinate glycerol. Phosphohistidine; by HPr is present on His231. Asp245 contacts sn-glycerol 3-phosphate. Asp245 and Gln246 together coordinate glycerol. Thr267 and Gly310 together coordinate ADP. Positions 267, 310, 314, and 411 each coordinate ATP. Residues Gly411 and Asn415 each coordinate ADP.

Belongs to the FGGY kinase family. As to quaternary structure, homotetramer and homodimer (in equilibrium). The phosphoenolpyruvate-dependent sugar phosphotransferase system (PTS), including enzyme I, and histidine-containing protein (HPr) are required for the phosphorylation, which leads to the activation of the enzyme.

It carries out the reaction glycerol + ATP = sn-glycerol 3-phosphate + ADP + H(+). It functions in the pathway polyol metabolism; glycerol degradation via glycerol kinase pathway; sn-glycerol 3-phosphate from glycerol: step 1/1. Its activity is regulated as follows. Activated by phosphorylation and inhibited by fructose 1,6-bisphosphate (FBP). Functionally, key enzyme in the regulation of glycerol uptake and metabolism. Catalyzes the phosphorylation of glycerol to yield sn-glycerol 3-phosphate. This chain is Glycerol kinase, found in Listeria monocytogenes serotype 4a (strain HCC23).